The following is a 242-amino-acid chain: Serine hydrolase cnsH (242 aa).

Residues S56, D138, and H216 each act as charge relay system in the active site.

This sequence belongs to the AB hydrolase 3 family.

It participates in alkaloid biosynthesis. In terms of biological role, serine hydrolase; part of the gene cluster that mediates the biosynthesis of communesins, a prominent class of indole alkaloids with great potential as pharmaceuticals. Communesins are biosynthesized by the coupling of tryptamine and aurantioclavine, two building blocks derived from L-tryptophan. The L-tryptophan decarboxylase cnsB converts L-tryptophan to tryptamine, whereas the tryptophan dimethylallyltransferase cnsF converts L-tryptophan to 4-dimethylallyl tryptophan which is further transformed to aurantioclavine by the aurantioclavine synthase cnsA, probably aided by the catalase cnsD. The cytochrome P450 monooxygenase cnsC catalyzes the heterodimeric coupling between the two different indole moieties, tryptamine and aurantioclavine, to construct vicinal quaternary stereocenters and yield the heptacyclic communesin scaffold. The O-methyltransferase cnsE then methylates the communesin scaffold to produce communesin K, the simplest characterized communesin that contains the heptacyclic core. The dioxygenase cnsJ converts communesin K into communesin I. Acylation to introduce the hexadienyl group at position N16 of communesin I by the acyltransferase cnsK leads to the production of communesin B. The hexadienyl group is produced by the highly reducing polyketide synthase cnsI, before being hydrolytically removed from cnsI by the serine hydrolase cnsH, converted into hexadienyl-CoA by the CoA ligase cnsG, and then transferred to communesin I by cnsK. Surprisingly, cnsK may also be a promiscuous acyltransferase that can tolerate a range of acyl groups, including acetyl-, propionyl-, and butyryl-CoA, which lead to communesins A, G and H respectively. The roles of the alpha-ketoglutarate-dependent dioxygenases cnsM and cnsP have still to be determined. This Penicillium expansum (Blue mold rot fungus) protein is Serine hydrolase cnsH.